Reading from the N-terminus, the 465-residue chain is Probable Xaa-Pro aminopeptidase pepP (465 aa).

The Mn(2+) site is built by D261, D272, E395, and E435.

This sequence belongs to the peptidase M24B family. Requires Mn(2+) as cofactor.

It catalyses the reaction Release of any N-terminal amino acid, including proline, that is linked to proline, even from a dipeptide or tripeptide.. In terms of biological role, catalyzes the removal of a penultimate prolyl residue from the N-termini of peptides. The polypeptide is Probable Xaa-Pro aminopeptidase pepP (pepP) (Talaromyces marneffei (strain ATCC 18224 / CBS 334.59 / QM 7333) (Penicillium marneffei)).